The primary structure comprises 304 residues: DCN1-like protein 3 (304 aa).

Disordered regions lie at residues 1–87 (MGQC…EESS) and 284–304 (EGEG…EEQT). Glycine 2 carries the N-myristoyl glycine lipid modification. A DCUN1 domain is found at 86–278 (SSLQRLEELF…LFDTFVEWEM (193 aa)).

As to quaternary structure, part of a complex containing DCUN1D3, CUL3 and RBX1. Interacts (via the DCUN1 domain) with the unneddylated cullins: interacts with CUL1, CUL2, CUL3, CUL4A, CUL4B and CUL5; these interactions promote the cullin neddylation and the identity of the cullin dictates the affinity of the interaction. Interacts preferentially with CUL3; this interaction triggers the relocalization of CUL3 to the cell membrane where CUL3 is neddylated. Interacts (via DCUN1 domain) with RBX1. May also interact with regulators or subunits of cullin-RING ligases such as RNF7, ELOB and DDB1; these interactions are bridged by cullins. Interacts (via DCUN1 domain) with CAND1; this interaction is bridged by cullins and strongly inhibits cullin neddylation. These CAND-cullin-DCNL complexes can only be neddylated in the presence of a substrate adapter. Interacts (via DCUN1 domain) with the N-terminally acetylated form of UBE2M and UBE2F.

The protein localises to the cell membrane. It is found in the cytoplasm. It localises to the nucleus. Its subcellular location is the perinuclear region. Functionally, contributes to the neddylation of all cullins by transferring NEDD8 from N-terminally acetylated NEDD8-conjugating E2s enzyme to different cullin C-terminal domain-RBX complexes and may play a role in the cell cycle progression by regulating the SCF ubiquitin E3 ligase complex, after UV damage. At the cell membrane, can promote and as well inhibit cullins neddylation. In Bos taurus (Bovine), this protein is DCN1-like protein 3.